The following is a 216-amino-acid chain: MTLSIRPDTVSAAQMVSSLSTQQTPTVTEAEMVQAVRTLLIGLGENPDREGLLDTPKRVVKALQFLTKGYNESLDELLNGAVFTEDANEMVLIRDIDIFSSCEHHILPIIGRAHVAYIPNGKVIGLSKIARVCEMYARRLQVQERLTLQIADALQGLLKPQGVAVVIEATHMCMVMRGVQKPGSWTVTSAMRGVFAEDARTREEFMNLVRHNANFH.

Belongs to the GTP cyclohydrolase I family. Homomer.

It catalyses the reaction GTP + H2O = 7,8-dihydroneopterin 3'-triphosphate + formate + H(+). It functions in the pathway cofactor biosynthesis; 7,8-dihydroneopterin triphosphate biosynthesis; 7,8-dihydroneopterin triphosphate from GTP: step 1/1. In Nostoc sp. (strain PCC 7120 / SAG 25.82 / UTEX 2576), this protein is GTP cyclohydrolase 1 2 (folE2).